The sequence spans 91 residues: Small ribosomal subunit protein uS17 (91 aa).

Belongs to the universal ribosomal protein uS17 family. As to quaternary structure, part of the 30S ribosomal subunit.

Its function is as follows. One of the primary rRNA binding proteins, it binds specifically to the 5'-end of 16S ribosomal RNA. This chain is Small ribosomal subunit protein uS17, found in Psychrobacter cryohalolentis (strain ATCC BAA-1226 / DSM 17306 / VKM B-2378 / K5).